Consider the following 205-residue polypeptide: Proteasome subunit beta type-3 (205 aa).

This sequence belongs to the peptidase T1B family. In terms of assembly, the 26S proteasome consists of a 20S proteasome core and two 19S regulatory subunits. The 20S proteasome core is composed of 28 subunits that are arranged in four stacked rings, resulting in a barrel-shaped structure. The two end rings are each formed by seven alpha subunits, and the two central rings are each formed by seven beta subunits. The catalytic chamber with the active sites is on the inside of the barrel.

The protein localises to the cytoplasm. Its subcellular location is the nucleus. Non-catalytic component of the proteasome, a multicatalytic proteinase complex which is characterized by its ability to cleave peptides with Arg, Phe, Tyr, Leu, and Glu adjacent to the leaving group at neutral or slightly basic pH. The proteasome has an ATP-dependent proteolytic activity. This is Proteasome subunit beta type-3 from Drosophila melanogaster (Fruit fly).